The sequence spans 85 residues: U4-theraphotoxin-Hhn1h (85 aa).

A signal peptide spans 1 to 22; sequence MKVTLIAILTCAAVLVLHTTAA. A propeptide spanning residues 23–48 is cleaved from the precursor; it reads EELEAESQLMEVGMPDTELAAVDEER. 3 cysteine pairs are disulfide-bonded: C52-C66, C56-C77, and C71-C82.

It belongs to the neurotoxin 12 (Hwtx-2) family. 02 (Hwtx-2) subfamily. As to expression, expressed by the venom gland.

The protein localises to the secreted. Postsynaptic neurotoxin. This Cyriopagopus hainanus (Chinese bird spider) protein is U4-theraphotoxin-Hhn1h.